An 820-amino-acid chain; its full sequence is Mediator of RNA polymerase II transcription subunit 16 (820 aa).

WD repeat units follow at residues 74 to 114 (SNKY…SEWK), 621 to 665 (RSFM…PVFS), and 757 to 811 (SNDN…KCRC).

Belongs to the Mediator complex subunit 16 family. In terms of assembly, component of the Mediator complex.

Its subcellular location is the nucleus. Functionally, component of the Mediator complex, a coactivator involved in the regulated transcription of nearly all RNA polymerase II-dependent genes. Mediator functions as a bridge to convey information from gene-specific regulatory proteins to the basal RNA polymerase II transcription machinery. Mediator is recruited to promoters by direct interactions with regulatory proteins and serves as a scaffold for the assembly of a functional preinitiation complex with RNA polymerase II and the general transcription factors. This is Mediator of RNA polymerase II transcription subunit 16 (MED16) from Aedes aegypti (Yellowfever mosquito).